The following is a 1637-amino-acid chain: Surface protein (1637 aa).

Positions Met1–Ala48 are cleaved as a signal peptide. Disordered regions lie at residues Ala49–Val305, Val689–Thr719, and Pro739–Leu1611. The segment covering Lys56–Lys65 has biased composition (basic and acidic residues). Residues Asn69–Ser83 are compositionally biased toward polar residues. 3 stretches are compositionally biased toward basic and acidic residues: residues Asp90–Asn106, Glu127–Thr180, and Glu188–Thr264. Polar residues predominate over residues Ala289–Ser298. G5 domains follow at residues Gln654–Glu737, His783–Glu865, His911–Glu993, His1039–Glu1121, and His1167–Ile1250. The span at Asp779–Thr817 shows a compositional bias: basic and acidic residues. A compositionally biased stretch (low complexity) spans Gln818–Thr832. Over residues Asp907 to Thr945 the composition is skewed to basic and acidic residues. A compositionally biased stretch (low complexity) spans Gln946–Thr960. Residues Asp1035–Thr1073 show a composition bias toward basic and acidic residues. A compositionally biased stretch (low complexity) spans Gln1074–Thr1088. Residues Asp1163–Leu1189 are compositionally biased toward basic and acidic residues. 2 stretches are compositionally biased toward acidic residues: residues Thr1282 to Asp1291 and Ser1302 to Ser1580. 141 tandem repeats follow at residues Asp1301–Ser1302, Asp1303–Ala1304, Asp1305–Ser1306, Asp1307–Ser1308, Asp1309–Ala1310, Asp1311–Ser1312, Asp1313–Ser1314, Asp1315–Ala1316, Asp1317–Ser1318, Asp1319–Ser1320, Asp1321–Ala1322, Asp1323–Ser1324, Asp1325–Ser1326, Asp1327–Ala1328, Asp1329–Ser1330, Asp1331–Ser1332, Asp1333–Ser1334, Asp1335–Ser1336, Asp1337–Ser1338, Asp1339–Ser1340, Asp1341–Ser1342, Asp1343–Ser1344, Asp1345–Ala1346, Asp1347–Ser1348, Asp1349–Ser1350, Asp1351–Ser1352, Asp1353–Ser1354, Asp1355–Ser1356, Asp1357–Ala1358, Asp1359–Ser1360, Asp1361–Ser1362, Asp1363–Ala1364, Asp1365–Ser1366, Asp1367–Ser1368, Asp1369–Ala1370, Asp1371–Ser1372, Asp1373–Ser1374, Asp1375–Ser1376, Asp1377–Ala1378, Asp1379–Ser1380, Asp1381–Ser1382, Asp1383–Ser1384, Asp1385–Ala1386, Asp1387–Ser1388, Asp1389–Ser1390, Asp1391–Ser1392, Asp1393–Ser1394, Asp1395–Ser1396, Asp1397–Ala1398, Asp1399–Ser1400, Asp1401–Ser1402, Asp1403–Ser1404, Asp1405–Ser1406, Asp1407–Ser1408, Asp1409–Ala1410, Asp1411–Ser1412, Asp1413–Ser1414, Asp1415–Ala1416, Asp1417–Ser1418, Asp1419–Ser1420, Asp1421–Ser1422, Asp1423–Ser1424, Asp1425–Ser1426, Asp1427–Ala1428, Asp1429–Ser1430, Asp1431–Ser1432, Asp1433–Ser1434, Asp1435–Ser1436, Asp1437–Ser1438, Asp1439–Ala1440, Asp1441–Ser1442, Asp1443–Ser1444, Asp1445–Ala1446, Asp1447–Ser1448, Asp1449–Ser1450, Asp1451–Ala1452, Asp1453–Ser1454, Asp1455–Ser1456, Asp1457–Ala1458, Asp1459–Ser1460, Asp1461–Ser1462, Asp1463–Ser1464, Asp1465–Ser1466, Asp1467–Ser1468, Asp1469–Ala1470, Asp1471–Ser1472, Asp1473–Ser1474, Asp1475–Ala1476, Asp1477–Ser1478, Asp1479–Ser1480, Asp1481–Ala1482, Asp1483–Ser1484, Asp1485–Ser1486, Asp1487–Ala1488, Asp1489–Ser1490, Asp1491–Ser1492, Asp1493–Ser1494, Asp1495–Ser1496, Asp1497–Ser1498, Asp1499–Ala1500, Asp1501–Ser1502, Asp1503–Ser1504, Asp1505–Ser1506, Asp1507–Ser1508, Asp1509–Ser1510, Asp1511–Ser1512, Asp1513–Ala1514, Asp1515–Ser1516, Asp1517–Ser1518, Asp1519–Ala1520, Asp1521–Ser1522, Asp1523–Ser1524, Asp1525–Ser1526, Asp1527–Ala1528, Asp1529–Ser1530, Asp1531–Ser1532, Asp1533–Ala1534, Asp1535–Ser1536, Asp1537–Ser1538, Asp1539–Ala1540, Asp1541–Gly1542, Asp1543–Ser1544, Asp1545–Ala1546, Asp1547–Ser1548, Asp1549–Ser1550, Asp1551–Ala1552, Asp1553–Ser1554, Asp1555–Ser1556, Asp1557–Ser1558, Asp1559–Ser1560, Asp1561–Ser1562, Asp1563–Ser1564, Asp1565–Ser1566, Asp1567–Ser1568, Asp1569–Ala1570, Asp1571–Ser1572, Asp1573–Ser1574, Asp1575–Ser1576, Asp1577–Ser1578, Asp1579–Ser1580, and Asp1581–Ala1582. The interval Asp1301–Ala1582 is 141 X 2 AA tandem repeats of D-[SAG]. The span at Asp1581–Pro1599 shows a compositional bias: basic and acidic residues. Residues Leu1598–Gly1602 carry the LPXTG sorting signal motif. Thr1601 carries the post-translational modification Pentaglycyl murein peptidoglycan amidated threonine. Positions Gly1602 to Lys1637 are cleaved as a propeptide — removed by sortase.

The protein localises to the secreted. Its subcellular location is the cell wall. Functionally, could have a role in preventing adhesion at some stages during an infection. This is Surface protein (pls) from Staphylococcus aureus.